A 69-amino-acid polypeptide reads, in one-letter code: Sperm protamine P1 (69 aa).

Composition is skewed to basic residues over residues 1–30 (MARF…RRGG) and 37–69 (KITR…RRRN). Positions 1–69 (MARFRPSRSR…SRRRRRRRRN (69 aa)) are disordered.

The protein belongs to the protamine P1 family. In terms of tissue distribution, testis.

Its subcellular location is the nucleus. It localises to the chromosome. Its function is as follows. Protamines substitute for histones in the chromatin of sperm during the haploid phase of spermatogenesis. They compact sperm DNA into a highly condensed, stable and inactive complex. In Tachyglossus aculeatus aculeatus (Southeast Australian short-beaked echidna), this protein is Sperm protamine P1 (PRM1).